An 852-amino-acid chain; its full sequence is Eukaryotic translation initiation factor 3 subunit C (852 aa).

The tract at residues 1 to 90 (MSRFFVSGYP…DSDSDDEGRK (90 aa)) is disordered. Residues 14 to 57 (SSEEEDLLSSSEEELLSSESEEDNFSSDSEFGNDSDNDSSDSDS) show a composition bias toward acidic residues. The PCI domain maps to 597–772 (FHMHINLELL…SFVNFTTNDH (176 aa)). The segment covering 798–809 (TASNGYSRKQPM) has biased composition (polar residues). Residues 798–852 (TASNGYSRKQPMQQQQQQQQQQQQQKEQKELLHEENNRFRYANVNANNDEFQTTA) form a disordered region. The segment covering 810-822 (QQQQQQQQQQQQQ) has biased composition (low complexity). Basic and acidic residues predominate over residues 823-835 (KEQKELLHEENNR). Polar residues predominate over residues 841–852 (VNANNDEFQTTA).

This sequence belongs to the eIF-3 subunit C family. Component of the eukaryotic translation initiation factor 3 (eIF-3) complex.

The protein resides in the cytoplasm. Its function is as follows. Component of the eukaryotic translation initiation factor 3 (eIF-3) complex, which is involved in protein synthesis of a specialized repertoire of mRNAs and, together with other initiation factors, stimulates binding of mRNA and methionyl-tRNAi to the 40S ribosome. The eIF-3 complex specifically targets and initiates translation of a subset of mRNAs involved in cell proliferation. The sequence is that of Eukaryotic translation initiation factor 3 subunit C from Debaryomyces hansenii (strain ATCC 36239 / CBS 767 / BCRC 21394 / JCM 1990 / NBRC 0083 / IGC 2968) (Yeast).